The following is a 124-amino-acid chain: Large ribosomal subunit protein uL29 (124 aa).

Belongs to the universal ribosomal protein uL29 family.

The chain is Large ribosomal subunit protein uL29 (RPL35) from Tetrahymena thermophila (strain SB210).